The primary structure comprises 260 residues: E3 ubiquitin-protein ligase SRFP1 (260 aa).

The CHY-type zinc finger occupies 11–80 (FGRMGFGCKH…VAQVCYNCGV (70 aa)). Positions 18, 20, 31, 32, 38, 41, 42, 50, 62, 65, 75, 78, 87, 90, 103, 104, 107, 110, 120, 121, 124, 127, 136, and 138 each coordinate Zn(2+). The CTCHY-type zinc finger occupies 82–146 (MGEYFCSACK…CCIENSMKNN (65 aa)). An RING-type; atypical zinc finger spans residues 147–190 (CPICYEYLFDSLRETSVLRCGHTMHLQCFHEMLKHDKFSCPICS).

As to expression, expressed in roots, leaves, nodes and panicles.

The protein resides in the nucleus. It localises to the cytoplasm. It carries out the reaction S-ubiquitinyl-[E2 ubiquitin-conjugating enzyme]-L-cysteine + [acceptor protein]-L-lysine = [E2 ubiquitin-conjugating enzyme]-L-cysteine + N(6)-ubiquitinyl-[acceptor protein]-L-lysine.. It participates in protein modification; protein ubiquitination. In terms of biological role, possesses E3 ubiquitin-protein ligase activity in vitro. Possesses transactivation activity in yeast cells. May modulate abiotic stress responses by negatively regulating antioxidant enzymes-mediated reactive oxygen species (ROS) removal. The sequence is that of E3 ubiquitin-protein ligase SRFP1 from Oryza sativa subsp. japonica (Rice).